The chain runs to 259 residues: Phosphoribosylaminoimidazole-succinocarboxamide synthase (259 aa).

It belongs to the SAICAR synthetase family.

It carries out the reaction 5-amino-1-(5-phospho-D-ribosyl)imidazole-4-carboxylate + L-aspartate + ATP = (2S)-2-[5-amino-1-(5-phospho-beta-D-ribosyl)imidazole-4-carboxamido]succinate + ADP + phosphate + 2 H(+). Its pathway is purine metabolism; IMP biosynthesis via de novo pathway; 5-amino-1-(5-phospho-D-ribosyl)imidazole-4-carboxamide from 5-amino-1-(5-phospho-D-ribosyl)imidazole-4-carboxylate: step 1/2. The protein is Phosphoribosylaminoimidazole-succinocarboxamide synthase of Hyphomonas neptunium (strain ATCC 15444).